A 621-amino-acid chain; its full sequence is Interferon-induced GTP-binding protein Mx1 (621 aa).

Residues 31 to 304 (DLALPAIAVI…LVHHIEKSLP (274 aa)) form the Dynamin-type G domain. The interval 41–48 (GDQSSGKS) is G1 motif. 41–48 (GDQSSGKS) lines the GTP pocket. Residues 66-68 (VTR) are G2 motif. The interval 142–145 (DLPG) is G3 motif. GTP-binding positions include 142–146 (DLPGI) and 211–214 (TKPD). A G4 motif region spans residues 211 to 214 (TKPD). Residues 243 to 246 (KCRG) form a G5 motif region. A GED domain is found at 535-621 (LQEMMLHLKS…MKARSYLVEF (87 aa)).

The protein belongs to the TRAFAC class dynamin-like GTPase superfamily. Dynamin/Fzo/YdjA family.

It localises to the cytoplasm. In terms of biological role, does not inhibit strain RB-1 of the fish pathogen, infectious hematopoietic necrosis virus (IHNV). The sequence is that of Interferon-induced GTP-binding protein Mx1 (mx1) from Oncorhynchus mykiss (Rainbow trout).